The following is a 72-amino-acid chain: Cytochrome b-c1 complex subunit 8 (72 aa).

At 2–41 (GKQPVKLKAVVYAISPFQQKIMPGLWKDLPGKIHHKVSEN) the chain is on the mitochondrial matrix side. Residues 42 to 59 (WISATLLLGPLVGTYSYV) form a helical membrane-spanning segment. At 60–72 (QHFLEKEKLEHRY) the chain is on the mitochondrial intermembrane side.

The protein belongs to the UQCRQ/QCR8 family. As to quaternary structure, component of the ubiquinol-cytochrome c oxidoreductase (cytochrome b-c1 complex, complex III, CIII), a multisubunit enzyme composed of 3 respiratory subunits cytochrome b, cytochrome c1 and Rieske protein, 2 core protein subunits, and additional low-molecular weight protein subunits. The complex exists as an obligatory dimer and forms supercomplexes (SCs) in the inner mitochondrial membrane with cytochrome c oxidase (complex IV, CIV).

The protein resides in the mitochondrion inner membrane. Functionally, component of the ubiquinol-cytochrome c oxidoreductase, a multisubunit transmembrane complex that is part of the mitochondrial electron transport chain which drives oxidative phosphorylation. The respiratory chain contains 3 multisubunit complexes succinate dehydrogenase (complex II, CII), ubiquinol-cytochrome c oxidoreductase (cytochrome b-c1 complex, complex III, CIII) and cytochrome c oxidase (complex IV, CIV), that cooperate to transfer electrons derived from NADH and succinate to molecular oxygen, creating an electrochemical gradient over the inner membrane that drives transmembrane transport and the ATP synthase. The cytochrome b-c1 complex catalyzes electron transfer from ubiquinol to cytochrome c, linking this redox reaction to translocation of protons across the mitochondrial inner membrane, with protons being carried across the membrane as hydrogens on the quinol. In the process called Q cycle, 2 protons are consumed from the matrix, 4 protons are released into the intermembrane space and 2 electrons are passed to cytochrome c. This is Cytochrome b-c1 complex subunit 8 from Solanum tuberosum (Potato).